The chain runs to 274 residues: Bis(5'-nucleosyl)-tetraphosphatase, symmetrical (274 aa).

It belongs to the Ap4A hydrolase family.

The catalysed reaction is P(1),P(4)-bis(5'-adenosyl) tetraphosphate + H2O = 2 ADP + 2 H(+). In terms of biological role, hydrolyzes diadenosine 5',5'''-P1,P4-tetraphosphate to yield ADP. This Janthinobacterium sp. (strain Marseille) (Minibacterium massiliensis) protein is Bis(5'-nucleosyl)-tetraphosphatase, symmetrical.